The chain runs to 356 residues: Vanillin synthase, chloroplastic (356 aa).

Residue N122 is glycosylated (N-linked (GlcNAc...) asparagine). 2 cysteine pairs are disulfide-bonded: C159–C202 and C193–C235. C162 is an active-site residue. Residue N251 is glycosylated (N-linked (GlcNAc...) asparagine). An intrachain disulfide couples C293 to C343. Active-site residues include H302 and N322.

This sequence belongs to the peptidase C1 family. Forms homodimers, homotrimers and homotetramers. As to expression, accumulates in the inner part of vanilla pods (at protein level). Expressed in single cells located a few cell layers from the inner epidermis.

It localises to the plastid. It is found in the chloroplast. It catalyses the reaction (E)-ferulate + H2O = vanillin + acetate. The catalysed reaction is 4-O-beta-D-glucosyl-trans-ferulate + H2O = 4-O-beta-D-glucosyl-vanillin + acetate. Its pathway is aromatic compound metabolism; phenylpropanoid biosynthesis. Its function is as follows. Involved in the biosynthesis of vanillin (4-hydroxy-3-methoxy-benzaldehyde) and derivative natural products, key components of vanilla pods flavor. Catalyzes the double carbon bond cleavage of ferulic acid to vanillin and of their respective glucosides via a coupled non-oxidative hydratase/lyase reaction. Inactive toward p-coumaric acid, caffeic acid and their glucosides derivatives. This chain is Vanillin synthase, chloroplastic, found in Vanilla planifolia (Vanilla).